A 464-amino-acid chain; its full sequence is Protein FAM90A3 (464 aa).

3 disordered regions span residues 1-42 (MMAR…DPRL), 70-389 (PATL…HDGA), and 411-437 (APSF…SEAP). Basic and acidic residues-rich tracts occupy residues 74–89 (GKKE…KPRV) and 97–114 (NKDK…DPQR). Positions 180-197 (LASLSPLRKASLSSSSSL) are enriched in low complexity.

Belongs to the FAM90 family.

The chain is Protein FAM90A3 from Homo sapiens (Human).